The following is a 201-amino-acid chain: MKLVLATNNKGKVKELAELLKPCGYQVVSIGEFPGFTEVEEDGNTFADNAIKKALAAAEFTGELALADDSGLEVDALKGAPGVYSARFAGEPKDDTANNAKLLSLLEGVPQDHRTARFRCVIAIAEPNGRIHTAEGSCEGVILRELKGEGGFGYDPLFYVPEYKQTFAELDMEKKNSISHRGKALKKAMEILNRLYIHQEV.

7-12 provides a ligand contact to substrate; the sequence is TNNKGK. The Mg(2+) site is built by Glu-40 and Asp-69. The Proton acceptor role is filled by Asp-69. Substrate contacts are provided by residues Ser-70, 152–155, Lys-175, and 180–181; these read FGYD and HR.

This sequence belongs to the HAM1 NTPase family. In terms of assembly, homodimer. It depends on Mg(2+) as a cofactor.

The enzyme catalyses XTP + H2O = XMP + diphosphate + H(+). The catalysed reaction is dITP + H2O = dIMP + diphosphate + H(+). It carries out the reaction ITP + H2O = IMP + diphosphate + H(+). Pyrophosphatase that catalyzes the hydrolysis of nucleoside triphosphates to their monophosphate derivatives, with a high preference for the non-canonical purine nucleotides XTP (xanthosine triphosphate), dITP (deoxyinosine triphosphate) and ITP. Seems to function as a house-cleaning enzyme that removes non-canonical purine nucleotides from the nucleotide pool, thus preventing their incorporation into DNA/RNA and avoiding chromosomal lesions. This chain is dITP/XTP pyrophosphatase, found in Desulforamulus reducens (strain ATCC BAA-1160 / DSM 100696 / MI-1) (Desulfotomaculum reducens).